We begin with the raw amino-acid sequence, 303 residues long: UDP-3-O-acyl-N-acetylglucosamine deacetylase (303 aa).

Positions 78, 237, and 241 each coordinate Zn(2+). Catalysis depends on histidine 264, which acts as the Proton donor.

It belongs to the LpxC family. The cofactor is Zn(2+).

It catalyses the reaction a UDP-3-O-[(3R)-3-hydroxyacyl]-N-acetyl-alpha-D-glucosamine + H2O = a UDP-3-O-[(3R)-3-hydroxyacyl]-alpha-D-glucosamine + acetate. Its pathway is glycolipid biosynthesis; lipid IV(A) biosynthesis; lipid IV(A) from (3R)-3-hydroxytetradecanoyl-[acyl-carrier-protein] and UDP-N-acetyl-alpha-D-glucosamine: step 2/6. In terms of biological role, catalyzes the hydrolysis of UDP-3-O-myristoyl-N-acetylglucosamine to form UDP-3-O-myristoylglucosamine and acetate, the committed step in lipid A biosynthesis. This Stenotrophomonas maltophilia (strain K279a) protein is UDP-3-O-acyl-N-acetylglucosamine deacetylase.